The primary structure comprises 207 residues: Lipid A acyltransferase PagP (207 aa).

An N-terminal signal peptide occupies residues Met-1 to Ala-24. Residues His-79, Asp-122, and Ser-123 contribute to the active site.

This sequence belongs to the lipid A palmitoyltransferase family. In terms of assembly, homodimer.

The protein resides in the cell outer membrane. It carries out the reaction a lipid A + a 1,2-diacyl-sn-glycero-3-phosphocholine = a hepta-acyl lipid A + a 2-acyl-sn-glycero-3-phosphocholine. It catalyses the reaction a lipid IVA + a 1,2-diacyl-sn-glycero-3-phosphocholine = a lipid IVB + a 2-acyl-sn-glycero-3-phosphocholine. The catalysed reaction is a lipid IIA + a 1,2-diacyl-sn-glycero-3-phosphocholine = a lipid IIB + a 2-acyl-sn-glycero-3-phosphocholine. Its function is as follows. Transfers a fatty acid residue from the sn-1 position of a phospholipid to the N-linked hydroxyfatty acid chain on the proximal unit of lipid A or its precursors. In Photorhabdus laumondii subsp. laumondii (strain DSM 15139 / CIP 105565 / TT01) (Photorhabdus luminescens subsp. laumondii), this protein is Lipid A acyltransferase PagP.